The primary structure comprises 386 residues: SWI/SNF-related matrix-associated actin-dependent regulator of chromatin subfamily B member 1 (386 aa).

The tract at residues Met1 to Ser114 is DNA-binding.

The protein belongs to the SNF5 family. Component of the multiprotein chromatin-remodeling complexes SWI/SNF. Component of neural progenitors-specific chromatin remodeling complex (npBAF complex) and the neuron-specific chromatin remodeling complex (nBAF complex). Component of the BAF (SWI/SNF) chromatin remodeling complex. Component of the SWI/SNF-B (PBAF) chromatin remodeling complex. Binds to double-stranded DNA.

The protein resides in the nucleus. Functionally, involved in chromatin-remodeling. Core component of the BAF (SWI/SNF) complex. This ATP-dependent chromatin-remodeling complex plays important roles in cell proliferation and differentiation, in cellular antiviral activities and inhibition of tumor formation. Belongs to the neural progenitors-specific chromatin remodeling complex (npBAF complex) and the neuron-specific chromatin remodeling complex (nBAF complex) and may play a role in neural development. This chain is SWI/SNF-related matrix-associated actin-dependent regulator of chromatin subfamily B member 1 (SMARCB1), found in Gallus gallus (Chicken).